The following is a 345-amino-acid chain: Succinylglutamate desuccinylase (345 aa).

Residues His-64, Glu-67, and His-161 each coordinate Zn(2+). Glu-225 is a catalytic residue.

It belongs to the AspA/AstE family. Succinylglutamate desuccinylase subfamily. Requires Zn(2+) as cofactor.

The enzyme catalyses N-succinyl-L-glutamate + H2O = L-glutamate + succinate. Its pathway is amino-acid degradation; L-arginine degradation via AST pathway; L-glutamate and succinate from L-arginine: step 5/5. Its function is as follows. Transforms N(2)-succinylglutamate into succinate and glutamate. This chain is Succinylglutamate desuccinylase, found in Shewanella pealeana (strain ATCC 700345 / ANG-SQ1).